The primary structure comprises 320 residues: Peptidase 1 (320 aa).

The signal sequence occupies residues 1 to 18 (MKIVLAIASLLALSAVYA). A propeptide spans 19 to 98 (RPSSIKTFEE…LKTQFDLNAE (80 aa)) (activation peptide). Cystine bridges form between Cys102–Cys215, Cys129–Cys169, and Cys163–Cys201. Residue Cys132 is part of the active site. Asn150 carries N-linked (GlcNAc...) asparagine glycosylation. Catalysis depends on residues His268 and Asn288.

It belongs to the peptidase C1 family. Post-translationally, N-glycosylated. N-glycanase treatment does not completely remove carbohydrates, suggesting that the protein contains additional glycosylation sites.

It is found in the secreted. The catalysed reaction is Broad endopeptidase specificity.. Functionally, thiol protease, with a preference for substrates with a large hydrophobic side chain in the P2 position, or with basic residues. In Dermatophagoides pteronyssinus (European house dust mite), this protein is Peptidase 1 (DERP1).